The primary structure comprises 263 residues: ATP synthase subunit a (263 aa).

The next 6 helical transmembrane spans lie at 26–46, 86–106, 130–150, 166–186, 195–215, and 229–249; these read VHLD…FFFS, VAPL…IDLI, DISA…FYTI, PFNH…TLLA, LFGN…MYMA, and LAWA…FMML.

Belongs to the ATPase A chain family. As to quaternary structure, F-type ATPases have 2 components, CF(1) - the catalytic core - and CF(0) - the membrane proton channel. CF(1) has five subunits: alpha(3), beta(3), gamma(1), delta(1), epsilon(1). CF(0) has three main subunits: a(1), b(2) and c(9-12). The alpha and beta chains form an alternating ring which encloses part of the gamma chain. CF(1) is attached to CF(0) by a central stalk formed by the gamma and epsilon chains, while a peripheral stalk is formed by the delta and b chains.

Its subcellular location is the cell inner membrane. In terms of biological role, key component of the proton channel; it plays a direct role in the translocation of protons across the membrane. The sequence is that of ATP synthase subunit a from Glaesserella parasuis serovar 5 (strain SH0165) (Haemophilus parasuis).